The following is a 69-amino-acid chain: Neuropeptide-like protein 30 (69 aa).

The signal sequence occupies residues 1-22 (MISTSSILILVVLLACFMAASA). Tyrosine amide occurs at positions 29, 39, 46, and 53. Trp-58 and Trp-67 each carry tryptophan amide.

It belongs to the YARP (YGGW-amide related peptide) family. As to expression, expressed in hypoderm.

It is found in the secreted. Its function is as follows. May have antimicrobial activity. May play a role in response to fungal infection. In Caenorhabditis elegans, this protein is Neuropeptide-like protein 30 (nlp-30).